The primary structure comprises 263 residues: Small ribosomal subunit protein eS4 (263 aa).

The region spanning 42 to 104 is the S4 RNA-binding domain; that stretch reads LPLIIFLRNR…TGENFRLIYD (63 aa).

Belongs to the eukaryotic ribosomal protein eS4 family.

The sequence is that of Small ribosomal subunit protein eS4 (RPS4) from Cricetulus griseus (Chinese hamster).